The sequence spans 135 residues: ARGOS-like protein (135 aa).

The segment at 71–122 is organ Size Related (OSR) domain; that stretch reads FSLESMVVLVGLTASLLILPLILPPLPPPPFMLLLIPIGIMVLLMVLAFMPS. 2 consecutive transmembrane segments (helical) span residues 76–96 and 100–120; these read MVVL…LPPL and PFML…LAFM.

The protein belongs to the plant organ size related (OSR) protein family. As to expression, expressed in cotyledons, roots, flowers, siliques and leaves.

It is found in the membrane. The protein resides in the nucleus. Its subcellular location is the cytoplasm. The protein localises to the endoplasmic reticulum. In terms of biological role, promotes cell expansion-dependent organ growth, probably via a brassinosteroids signaling pathway. Acts downstream of BRI1. This Arabidopsis thaliana (Mouse-ear cress) protein is ARGOS-like protein (ARL).